Here is a 513-residue protein sequence, read N- to C-terminus: UDP-N-acetylmuramyl-tripeptide synthetase (513 aa).

S38 contacts UDP-N-acetyl-alpha-D-muramoyl-L-alanyl-D-glutamate. Residue 115-121 coordinates ATP; sequence GTKGKTT. Residues 161 to 162, S188, and R196 contribute to the UDP-N-acetyl-alpha-D-muramoyl-L-alanyl-D-glutamate site; that span reads TT. K230 is subject to N6-carboxylysine.

This sequence belongs to the MurCDEF family. MurE subfamily. In terms of processing, carboxylation is probably crucial for Mg(2+) binding and, consequently, for the gamma-phosphate positioning of ATP.

The protein resides in the cytoplasm. It participates in cell wall biogenesis; peptidoglycan biosynthesis. In terms of biological role, catalyzes the addition of an amino acid to the nucleotide precursor UDP-N-acetylmuramoyl-L-alanyl-D-glutamate (UMAG) in the biosynthesis of bacterial cell-wall peptidoglycan. The chain is UDP-N-acetylmuramyl-tripeptide synthetase from Latilactobacillus sakei subsp. sakei (strain 23K) (Lactobacillus sakei subsp. sakei).